A 320-amino-acid chain; its full sequence is Malate dehydrogenase (320 aa).

NAD(+)-binding positions include glycine 10–glycine 15 and aspartate 34. Residues arginine 83 and arginine 89 each contribute to the substrate site. NAD(+)-binding positions include asparagine 96 and isoleucine 119–asparagine 121. Asparagine 121 and arginine 152 together coordinate substrate. The active-site Proton acceptor is histidine 176.

It belongs to the LDH/MDH superfamily. MDH type 3 family.

It catalyses the reaction (S)-malate + NAD(+) = oxaloacetate + NADH + H(+). Functionally, catalyzes the reversible oxidation of malate to oxaloacetate. The protein is Malate dehydrogenase of Rhizobium rhizogenes (strain K84 / ATCC BAA-868) (Agrobacterium radiobacter).